Reading from the N-terminus, the 381-residue chain is NF-kappa-B inhibitor-like protein 1 (381 aa).

The segment at 1 to 34 (MSNPSPQAPEEEASTSVCRPQSCSMASASRRHRR) is disordered. The segment covering 14–27 (STSVCRPQSCSMAS) has biased composition (polar residues). 2 ANK repeats span residues 64-93 (AGQPPPLHRACARHDAPALCLLLRLGADPA) and 97-134 (RHGDTALHAAARQGPDAYTDFFLPLLSRCPSAMGIKNK). Disordered stretches follow at residues 132 to 167 (KNKDGETPGQILGWGPPWDSAEEEEDEEVSKEREWR) and 186 to 298 (EDDA…WRFG). Ser-151 bears the Phosphoserine mark. The span at 151-160 (SAEEEEDEEV) shows a compositional bias: acidic residues. Composition is skewed to basic and acidic residues over residues 205 to 218 (RLAREHAQKQRQQL) and 237 to 290 (RQHE…RGAE).

As to quaternary structure, interacts with CACTIN (via N-terminal domain); the interaction occurs in a pro-inflammatory-independent manner. High expression found in heart muscle, liver, kidney and skin. Not detected in spleen, lung and brain.

The protein resides in the nucleus. Its function is as follows. Involved in the regulation of innate immune response. Acts as negative regulator of Toll-like receptor and interferon-regulatory factor (IRF) signaling pathways. Contributes to the negative regulation of transcriptional activation of NF-kappa-B target genes in response to endogenous pro-inflammatory stimuli. The protein is NF-kappa-B inhibitor-like protein 1 (Nfkbil1) of Mus musculus (Mouse).